A 574-amino-acid chain; its full sequence is Tyrosinase (574 aa).

Cu cation contacts are provided by His67, His95, His104, His275, His279, and His304. Positions 93–95 (CTH) form a cross-link, 2'-(S-cysteinyl)-histidine (Cys-His).

The protein belongs to the tyrosinase family. Cu(2+) serves as cofactor.

The enzyme catalyses 2 L-dopa + O2 = 2 L-dopaquinone + 2 H2O. It catalyses the reaction L-tyrosine + O2 = L-dopaquinone + H2O. This is a copper-containing oxidase that functions in the formation of pigments such as melanins and other polyphenolic compounds. The polypeptide is Tyrosinase (TYR) (Podospora anserina (Pleurage anserina)).